The chain runs to 75 residues: MAFLKKSLFLVLFLGLVSLSMCEEEKRENEVEEEQEDDEQSELRRSLWSSIKDMAAAAGRAALNAVNGIVNPGEQ.

Residues 1–22 form the signal peptide; sequence MAFLKKSLFLVLFLGLVSLSMC. The propeptide occupies 23–45; that stretch reads EEEKRENEVEEEQEDDEQSELRR. Proline 72 is modified (proline amide). Positions 74–75 are excised as a propeptide; that stretch reads EQ.

This sequence belongs to the frog skin active peptide (FSAP) family. Dermaseptin subfamily. In terms of tissue distribution, expressed by the skin glands.

It is found in the secreted. It localises to the target cell membrane. Its function is as follows. Antimicrobial peptide with activity against Gram-positive and Gram-negative bacteria and fungi. Has been tested against E.coli (MIC=47.50-128 uM), S.aureus (MIC=189.98-512 uM), K.pneumoniae (MIC&gt;189.98 uM) and C.albicans (MIC&gt;189.98 uM). Probably acts by disturbing membrane functions with its alpha-helical amphipathic structure. May penetrate bacterial membranes, but stay at the mammalian membrane surface. Shows a very weak hemolytic activity. The chain is Dermaseptin-SP3 from Agalychnis spurrelli (Gliding leaf frog).